The sequence spans 135 residues: Large ribosomal subunit protein mL41B (135 aa).

The transit peptide at M1–R13 directs the protein to the mitochondrion.

This sequence belongs to the mitochondrion-specific ribosomal protein mL41 family. In terms of assembly, component of the mitochondrial ribosome large subunit (39S) which comprises a 16S rRNA and about 50 distinct proteins.

It is found in the mitochondrion. Component of the mitochondrial ribosome large subunit. Also involved in apoptosis and cell cycle. This is Large ribosomal subunit protein mL41B (mrpl41-b) from Xenopus laevis (African clawed frog).